The chain runs to 138 residues: Small ribosomal subunit protein uS11c (138 aa).

The interval 1–23 is disordered; the sequence is MAKPIPRIGSRKNGRIGSRKSGR. Residues 9 to 23 are compositionally biased toward basic residues; that stretch reads GSRKNGRIGSRKSGR.

This sequence belongs to the universal ribosomal protein uS11 family. Part of the 30S ribosomal subunit.

It is found in the plastid. Its subcellular location is the chloroplast. The polypeptide is Small ribosomal subunit protein uS11c (Buxus microphylla (Littleleaf boxwood)).